The sequence spans 217 residues: Thymidylate kinase (217 aa).

An ATP-binding site is contributed by 12–19 (GIDGSGKS).

Belongs to the thymidylate kinase family.

The catalysed reaction is dTMP + ATP = dTDP + ADP. Phosphorylation of dTMP to form dTDP in both de novo and salvage pathways of dTTP synthesis. The protein is Thymidylate kinase of Cereibacter sphaeroides (strain ATCC 17023 / DSM 158 / JCM 6121 / CCUG 31486 / LMG 2827 / NBRC 12203 / NCIMB 8253 / ATH 2.4.1.) (Rhodobacter sphaeroides).